We begin with the raw amino-acid sequence, 250 residues long: Anamorsin homolog 2 (250 aa).

The N-terminal SAM-like domain stretch occupies residues 1-102 (MNLKITINQQ…QTKKINIPQQ (102 aa)). Positions 102–149 (QDFNNCYGKYDYIEQKFQNQINFFKQVDLKGNQETIDENELLNDGVEV) are linker. C155, C162, C165, and C167 together coordinate [2Fe-2S] cluster. The segment at 155–167 (CASKPRACANCTC) is fe-S binding site A. 4 residues coordinate [4Fe-4S] cluster: C193, C196, C204, and C207. 2 consecutive short sequence motifs (cx2C motif) follow at residues 193–196 (CGSC) and 204–207 (CANC). The interval 193 to 207 (CGSCYLGDAFRCANC) is fe-S binding site B.

It belongs to the anamorsin family. Monomer. The cofactor is [2Fe-2S] cluster. Requires [4Fe-4S] cluster as cofactor.

The protein resides in the cytoplasm. The protein localises to the mitochondrion intermembrane space. Its function is as follows. Component of the cytosolic iron-sulfur (Fe-S) protein assembly (CIA) machinery. Required for the maturation of extramitochondrial Fe-S proteins. Part of an electron transfer chain functioning in an early step of cytosolic Fe-S biogenesis, facilitating the de novo assembly of a [4Fe-4S] cluster on the cytosolic Fe-S scaffold complex. Electrons are transferred from NADPH via a FAD- and FMN-containing diflavin oxidoreductase. Together with the diflavin oxidoreductase, also required for the assembly of the diferric tyrosyl radical cofactor of ribonucleotide reductase (RNR), probably by providing electrons for reduction during radical cofactor maturation in the catalytic small subunit. The sequence is that of Anamorsin homolog 2 from Paramecium tetraurelia.